Here is a 155-residue protein sequence, read N- to C-terminus: Transcriptional regulator MraZ (155 aa).

2 consecutive SpoVT-AbrB domains span residues 7–54 (TYEC…PMEE) and 83–126 (VKTV…DKDK).

It belongs to the MraZ family. As to quaternary structure, forms oligomers.

The protein resides in the cytoplasm. It is found in the nucleoid. This chain is Transcriptional regulator MraZ, found in Christiangramia forsetii (strain DSM 17595 / CGMCC 1.15422 / KT0803) (Gramella forsetii).